A 983-amino-acid chain; its full sequence is Bifunctional glutamine synthetase adenylyltransferase/adenylyl-removing enzyme (983 aa).

The interval 1–490 is adenylyl removase; the sequence is MDRKSSVTID…AHGQVFYSPV (490 aa). The adenylyl transferase stretch occupies residues 496–983; it reads RIPTQDLRMS…RVVDAVFWNQ (488 aa).

This sequence belongs to the GlnE family. Mg(2+) is required as a cofactor.

The enzyme catalyses [glutamine synthetase]-O(4)-(5'-adenylyl)-L-tyrosine + phosphate = [glutamine synthetase]-L-tyrosine + ADP. It carries out the reaction [glutamine synthetase]-L-tyrosine + ATP = [glutamine synthetase]-O(4)-(5'-adenylyl)-L-tyrosine + diphosphate. In terms of biological role, involved in the regulation of glutamine synthetase GlnA, a key enzyme in the process to assimilate ammonia. When cellular nitrogen levels are high, the C-terminal adenylyl transferase (AT) inactivates GlnA by covalent transfer of an adenylyl group from ATP to specific tyrosine residue of GlnA, thus reducing its activity. Conversely, when nitrogen levels are low, the N-terminal adenylyl removase (AR) activates GlnA by removing the adenylyl group by phosphorolysis, increasing its activity. The regulatory region of GlnE binds the signal transduction protein PII (GlnB) which indicates the nitrogen status of the cell. The sequence is that of Bifunctional glutamine synthetase adenylyltransferase/adenylyl-removing enzyme from Cutibacterium acnes (strain DSM 16379 / KPA171202) (Propionibacterium acnes).